The chain runs to 420 residues: Uteroferrin-associated basic protein 2 (420 aa).

Residues 1–25 (MSHGKMPLVLSLVLILCGLFNSISC) form the signal peptide. 3 N-linked (GlcNAc...) asparagine glycosylation sites follow: Asn-225, Asn-271, and Asn-343.

The protein belongs to the serpin family. UTMP subfamily.

The protein resides in the secreted. The protein localises to the extracellular space. This chain is Uteroferrin-associated basic protein 2, found in Sus scrofa (Pig).